A 201-amino-acid polypeptide reads, in one-letter code: Large ribosomal subunit protein bL25 (201 aa).

The protein belongs to the bacterial ribosomal protein bL25 family. CTC subfamily. In terms of assembly, part of the 50S ribosomal subunit; part of the 5S rRNA/L5/L18/L25 subcomplex. Contacts the 5S rRNA. Binds to the 5S rRNA independently of L5 and L18.

This is one of the proteins that binds to the 5S RNA in the ribosome where it forms part of the central protuberance. The protein is Large ribosomal subunit protein bL25 of Akkermansia muciniphila (strain ATCC BAA-835 / DSM 22959 / JCM 33894 / BCRC 81048 / CCUG 64013 / CIP 107961 / Muc).